The sequence spans 336 residues: Nuclear egress protein 2 (336 aa).

Residues 1-315 (MASPEERLLD…AWRYSWRATP (315 aa)) lie on the Perinuclear space side of the membrane. Disordered regions lie at residues 193-221 (RSGQ…GCLG) and 277-297 (RTRE…VPPE). A compositionally biased stretch (basic residues) spans 277 to 288 (RTRETRRMRGSH). The chain crosses the membrane as a helical span at residues 316–333 (YLARVLAVTAVALLLMFL). At 334-336 (RWT) the chain is on the nuclear side.

Belongs to the herpesviridae NEC2 protein family. In terms of assembly, forms a heterodimeric viral nuclear egress complex (NEC) with NEC1. Interacts with host IKBKE; this interaction inhibits host IKBKE kinase activity and IRF3 nuclear translocation. Phosphorylated.

The protein localises to the host nucleus inner membrane. Its subcellular location is the host cytoplasm. It localises to the host perinuclear region. Plays an essential role in virion nuclear egress, the first step of virion release from infected cell. Within the host nucleus, NEC1 interacts with the newly formed capsid through the vertexes and directs it to the inner nuclear membrane by associating with NEC2. Induces the budding of the capsid at the inner nuclear membrane as well as its envelopment into the perinuclear space. There, the NEC1/NEC2 complex promotes the fusion of the enveloped capsid with the outer nuclear membrane and the subsequent release of the viral capsid into the cytoplasm where it will reach the secondary budding sites in the host Golgi or trans-Golgi network. Inhibits host IKBKE and IRF3, thereby impairing type I IFN signaling. This is Nuclear egress protein 2 from Homo sapiens (Human).